Reading from the N-terminus, the 196-residue chain is FMN-dependent NADH:quinone oxidoreductase (196 aa).

Serine 10 serves as a coordination point for FMN.

It belongs to the azoreductase type 1 family. As to quaternary structure, homodimer. It depends on FMN as a cofactor.

It carries out the reaction 2 a quinone + NADH + H(+) = 2 a 1,4-benzosemiquinone + NAD(+). The catalysed reaction is N,N-dimethyl-1,4-phenylenediamine + anthranilate + 2 NAD(+) = 2-(4-dimethylaminophenyl)diazenylbenzoate + 2 NADH + 2 H(+). Quinone reductase that provides resistance to thiol-specific stress caused by electrophilic quinones. Functionally, also exhibits azoreductase activity. Catalyzes the reductive cleavage of the azo bond in aromatic azo compounds to the corresponding amines. The chain is FMN-dependent NADH:quinone oxidoreductase from Cereibacter sphaeroides (strain KD131 / KCTC 12085) (Rhodobacter sphaeroides).